The primary structure comprises 303 residues: Putative ring-cleaving dioxygenase MhqE (303 aa).

VOC domains are found at residues 5 to 129 (GLHH…IMED) and 150 to 266 (GMKG…IATD). Residues H8, H215, and E262 each contribute to the Fe cation site.

Belongs to the extradiol ring-cleavage dioxygenase family. It depends on Fe(2+) as a cofactor.

It localises to the cytoplasm. Its function is as follows. Putative ring-cleavage dioxygenase that may contribute to the degradation of aromatic compounds. The polypeptide is Putative ring-cleaving dioxygenase MhqE (mhqE) (Bacillus subtilis (strain 168)).